A 554-amino-acid polypeptide reads, in one-letter code: Glucose-6-phosphate isomerase (554 aa).

Residue E358 is the Proton donor of the active site. Residues H389 and K515 contribute to the active site. Positions 527–540 (ADNSPAPQSDSSTD) are enriched in polar residues. The segment at 527-554 (ADNSPAPQSDSSTDALVRRYRSERGRTS) is disordered. Residues 542-554 (LVRRYRSERGRTS) are compositionally biased toward basic and acidic residues.

It belongs to the GPI family.

The protein resides in the cytoplasm. It carries out the reaction alpha-D-glucose 6-phosphate = beta-D-fructose 6-phosphate. Its pathway is carbohydrate biosynthesis; gluconeogenesis. It functions in the pathway carbohydrate degradation; glycolysis; D-glyceraldehyde 3-phosphate and glycerone phosphate from D-glucose: step 2/4. In terms of biological role, catalyzes the reversible isomerization of glucose-6-phosphate to fructose-6-phosphate. In Mycobacterium avium (strain 104), this protein is Glucose-6-phosphate isomerase.